The following is a 163-amino-acid chain: Adenosine 5'-monophosphoramidase HINT2 (163 aa).

The transit peptide at 1-17 (MAAAVVLAAGLCVARRA) directs the protein to the mitochondrion. The 109-residue stretch at 55–163 (IFSRILDRSL…GGRQLQWPPG (109 aa)) folds into the HIT domain. AMP is bound by residues serine 63 and aspartate 80. Lysine 119 carries the N6-acetyllysine modification. Asparagine 136 is a binding site for AMP. Lysine 139 carries the post-translational modification N6-acetyllysine. Residues 142–145 (AQSV) and 149–151 (HIH) contribute to the AMP site. The Histidine triad motif motif lies at 147 to 151 (HLHIH). Histidine 149 functions as the Tele-AMP-histidine intermediate in the catalytic mechanism.

Belongs to the HINT family.

It localises to the mitochondrion. It carries out the reaction adenosine 5'-phosphoramidate + H2O = AMP + NH4(+). Functionally, exhibits adenosine 5'-monophosphoramidase activity, hydrolyzing purine nucleotide phosphoramidates with a single phosphate group such as adenosine 5'monophosphoramidate (AMP-NH2) to yield AMP and NH2. Hydrolyzes adenosine 5'-O-p-nitrophenylphosphoramidate (AMP-pNA). May be involved in steroid biosynthesis. May play a role in apoptosis. The chain is Adenosine 5'-monophosphoramidase HINT2 from Bos taurus (Bovine).